The chain runs to 481 residues: Protein NRT1/ PTR FAMILY 1.3 (481 aa).

A run of 12 helical transmembrane segments spans residues 32-52 (LAYF…YGMG), 57-77 (ANIL…GAFI), 88-108 (IGFG…TTII), 124-144 (LLKS…AGGV), 173-193 (FNWY…LLVF), 202-222 (IGFG…FAAS), 259-279 (IWST…FIVL), 302-322 (IFLV…IVPL), 333-353 (LGVM…ISAL), 374-394 (AMWL…NTIA), 422-442 (ASLI…GSWI), and 451-471 (LDYY…YFVW).

Belongs to the major facilitator superfamily. Proton-dependent oligopeptide transporter (POT/PTR) (TC 2.A.17) family. In terms of tissue distribution, expressed in roots.

It is found in the membrane. The polypeptide is Protein NRT1/ PTR FAMILY 1.3 (NPF1.3) (Arabidopsis thaliana (Mouse-ear cress)).